The sequence spans 800 residues: Cation/H(+) antiporter 9 (800 aa).

A run of 12 helical transmembrane segments spans residues 43-63 (VIFGYALPLLELQIILIFVCI), 73-93 (IGIPRFVSNILAGLILGPQLL), 110-130 (NVALEGVARLGLVMFTFLMGV), 145-165 (IVIAVSSFFVTMISGLAFRNF), 186-206 (VIVSIQAVTLLPVITHLVYEL), 216-236 (IAISTAAVSDFLGFLTLVCIS), 247-267 (GIANRDIVALIILVLVILFIF), 287-306 (VYLYVTILTAIAASIYLSVF), 338-358 (LVTNIFFPISIAVMAMKADVV), 371-391 (ILLLGLTVVVKWTASFVPCLI), 401-421 (VIIATIMNYKGFVDLCFFDVA), and 430-450 (ATYTVMIIYVLLNAGILPTII).

This sequence belongs to the monovalent cation:proton antiporter 2 (CPA2) transporter (TC 2.A.37) family. CHX (TC 2.A.37.4) subfamily.

The protein localises to the membrane. In terms of biological role, may operate as a cation/H(+) antiporter. The chain is Cation/H(+) antiporter 9 (CHX9) from Arabidopsis thaliana (Mouse-ear cress).